A 317-amino-acid polypeptide reads, in one-letter code: DNA-directed RNA polymerase subunit alpha (317 aa).

An alpha N-terminal domain (alpha-NTD) region spans residues M1 to F229. Residues A245 to R317 form an alpha C-terminal domain (alpha-CTD) region.

Belongs to the RNA polymerase alpha chain family. Homodimer. The RNAP catalytic core consists of 2 alpha, 1 beta, 1 beta' and 1 omega subunit. When a sigma factor is associated with the core the holoenzyme is formed, which can initiate transcription.

It catalyses the reaction RNA(n) + a ribonucleoside 5'-triphosphate = RNA(n+1) + diphosphate. Its function is as follows. DNA-dependent RNA polymerase catalyzes the transcription of DNA into RNA using the four ribonucleoside triphosphates as substrates. This is DNA-directed RNA polymerase subunit alpha from Aquifex aeolicus (strain VF5).